We begin with the raw amino-acid sequence, 148 residues long: MRGRELPLVLLALVLCLAPRGRAVPLPAGGGTVLTKMYPRGNHWAVGHLMGKKSTGESSSVSERGSLKQQLREYIRWEEAARNLLGLIEAKENRNHQPPQPKALGNQQPSWDSEDSSNFKDVGSKGKVGRLSAPGSQREGRNPQLNQQ.

Residues 1 to 23 (MRGRELPLVLLALVLCLAPRGRA) form the signal peptide. Met50 bears the Methionine amide mark. Positions 54–148 (STGESSSVSE…EGRNPQLNQQ (95 aa)) are excised as a propeptide. Positions 89-148 (EAKENRNHQPPQPKALGNQQPSWDSEDSSNFKDVGSKGKVGRLSAPGSQREGRNPQLNQQ) are disordered.

It belongs to the bombesin/neuromedin-B/ranatensin family.

The protein resides in the secreted. The protein localises to the cytoplasmic vesicle. It is found in the secretory vesicle lumen. Its subcellular location is the cell projection. It localises to the neuron projection. Functionally, stimulates the release of gastrin and other gastrointestinal hormones. Contributes to the perception of prurient stimuli and to the transmission of itch signals in the spinal cord that promote scratching behavior. Contributes primarily to nonhistaminergic itch sensation. In one study, shown to act in the amygdala as part of an inhibitory network which inhibits memory specifically related to learned fear. In another study, shown to act on vasoactive intestinal peptide (VIP)-expressing cells in the auditory cortex, most likely via extrasynaptic diffusion from local and long-range sources, to mediate disinhibition of glutamatergic cells via VIP cell-specific GRPR signaling which leads to enhanced auditory fear memories. Contributes to the regulation of food intake. Inhibits voltage-gated sodium channels but enhances voltage-gated potassium channels in hippocampal neurons. Induces sighing by acting directly on the pre-Botzinger complex, a cluster of several thousand neurons in the ventrolateral medulla responsible for inspiration during respiratory activity. Induces an itch response through activation of receptors present on mast cells, triggering mast cell degranulation. In Homo sapiens (Human), this protein is Gastrin-releasing peptide (GRP).